The following is a 383-amino-acid chain: Protein COS7 (383 aa).

Topologically, residues 1–42 (MKENEVKDEKSVDVLSFKQLESQKIVLPQDLFRSSFTWFCYE) are cytoplasmic. A helical membrane pass occupies residues 43 to 63 (IYKSLAFRIWMLLWLPLSVWW). Residues 64–72 (KLSNNCIYP) are Extracellular-facing. Residues 73–93 (LIVSLLVLFLGPIFVLVICGL) form a helical membrane-spanning segment. The Cytoplasmic segment spans residues 94–232 (SRKRSLSKQL…RSKLTWFLKR (139 aa)). A helical transmembrane segment spans residues 233 to 253 (IFTIYSLPLWLAFLNCICVSQ). Position 254 (histidine 254) is a topological domain, extracellular. The helical transmembrane segment at 255-275 (FCLAFRILCPGLFFLMMVWLF) threads the bilayer. Residues 276-383 (QNMRTTALLV…SRNEESLMKK (108 aa)) are Cytoplasmic-facing.

It belongs to the DUP/COS family.

The protein localises to the membrane. The polypeptide is Protein COS7 (COS7) (Saccharomyces cerevisiae (strain ATCC 204508 / S288c) (Baker's yeast)).